We begin with the raw amino-acid sequence, 256 residues long: Pimeloyl-[acyl-carrier protein] methyl ester esterase (256 aa).

The region spanning 15–242 (HLVLLHGWGL…AAHAPFISHP (228 aa)) is the AB hydrolase-1 domain. Residues tryptophan 22, 82-83 (SL), and 143-147 (FLALQ) contribute to the substrate site. The Nucleophile role is filled by serine 82. Catalysis depends on residues aspartate 207 and histidine 235. Substrate is bound at residue histidine 235.

Belongs to the AB hydrolase superfamily. Carboxylesterase BioH family. In terms of assembly, monomer.

The protein localises to the cytoplasm. It carries out the reaction 6-carboxyhexanoyl-[ACP] methyl ester + H2O = 6-carboxyhexanoyl-[ACP] + methanol + H(+). It functions in the pathway cofactor biosynthesis; biotin biosynthesis. Functionally, the physiological role of BioH is to remove the methyl group introduced by BioC when the pimeloyl moiety is complete. It allows to synthesize pimeloyl-ACP via the fatty acid synthetic pathway through the hydrolysis of the ester bonds of pimeloyl-ACP esters. This Escherichia coli O157:H7 protein is Pimeloyl-[acyl-carrier protein] methyl ester esterase.